A 135-amino-acid chain; its full sequence is Holo-[acyl-carrier-protein] synthase (135 aa).

2 residues coordinate Mg(2+): D8 and E57.

It belongs to the P-Pant transferase superfamily. AcpS family. It depends on Mg(2+) as a cofactor.

The protein localises to the cytoplasm. The enzyme catalyses apo-[ACP] + CoA = holo-[ACP] + adenosine 3',5'-bisphosphate + H(+). Transfers the 4'-phosphopantetheine moiety from coenzyme A to a Ser of acyl-carrier-protein. The sequence is that of Holo-[acyl-carrier-protein] synthase from Methylobacterium sp. (strain 4-46).